Here is a 432-residue protein sequence, read N- to C-terminus: Asparagine--tRNA ligase (432 aa).

It belongs to the class-II aminoacyl-tRNA synthetase family. Homodimer.

Its subcellular location is the cytoplasm. It catalyses the reaction tRNA(Asn) + L-asparagine + ATP = L-asparaginyl-tRNA(Asn) + AMP + diphosphate + H(+). This is Asparagine--tRNA ligase from Lactobacillus gasseri (strain ATCC 33323 / DSM 20243 / BCRC 14619 / CIP 102991 / JCM 1131 / KCTC 3163 / NCIMB 11718 / NCTC 13722 / AM63).